An 808-amino-acid chain; its full sequence is Zinc finger protein 841 (808 aa).

Lys137 is covalently cross-linked (Glycyl lysine isopeptide (Lys-Gly) (interchain with G-Cter in SUMO2)). The C2H2-type 1; degenerate zinc-finger motif lies at 145 to 167 (YIGNECGKAFRVSSSLINHQMIH). The C2H2-type 2; degenerate zinc finger occupies 173–195 (YRCNESGKAFHRGSLLTVHQIVH). C2H2-type zinc fingers lie at residues 201–223 (YQCDVCGRIFRQNSDLVNHRRSH), 229–251 (YICNECGKSFSKSSHLAVHQRIH), 257–279 (YKCNRCGKCFSQSSSLATHQTVH), 285–307 (YKCNECGKTFKRNSSLTAHHIIH), 313–335 (YTCDVCGKVFYQNSQLVRHQIIH), 341–363 (YKCNECGKVFFQRSRLAGHRRIH), 369–391 (YKCNECGKVFSQHSHLAVHQRVH), 397–419 (YKCNECGKAFNWGSLLTVHQRIH), 425–447 (YKCNVCGKVFNYGGYLSVHMRCH), 453–475 (LHCNKCGMVFTYYSCLARHQRMH), 481–503 (YKCNVCGKVFIDSGNLSIHRRSH), 509–531 (FQCNECGKVFSYYSCLARHRKIH), and 537–559 (YKCNDCGKAYTQRSSLTKHLVIH). Glycyl lysine isopeptide (Lys-Gly) (interchain with G-Cter in SUMO2) cross-links involve residues Lys554 and Lys579. Residues 565 to 587 (YHCNEFGEAFIQSSKLARYHRNP) form a C2H2-type 16; degenerate zinc finger. C2H2-type zinc fingers lie at residues 593–615 (HKCSECGRTFSHKTSLVYHQRRH), 621–643 (YKCIECGKVFNSTTTLARHRRIH), 649–671 (YKCNECGKVFRYRSGLARHWSIH), 677–699 (YKCNECGKAFRVRSILLNHQMMH), 705–727 (YKCNECGKAFIERSNLVYHQRNH), 733–755 (YKCMECGKAFGRRSCLTKHQRIH), and 761–783 (YKCNECGKSYISRSGLTKHQIKH). A Glycyl lysine isopeptide (Lys-Gly) (interchain with G-Cter in SUMO2) cross-link involves residue Lys791.

The protein belongs to the krueppel C2H2-type zinc-finger protein family.

It is found in the nucleus. May be involved in transcriptional regulation. This is Zinc finger protein 841 (ZNF841) from Homo sapiens (Human).